Here is a 56-residue protein sequence, read N- to C-terminus: Large ribosomal subunit protein bL33 (56 aa).

Belongs to the bacterial ribosomal protein bL33 family.

The chain is Large ribosomal subunit protein bL33 from Delftia acidovorans (strain DSM 14801 / SPH-1).